The chain runs to 95 residues: Integration host factor subunit beta (95 aa).

A disordered region spans residues 56–76 (RAPRTGRNPKTGTSVELDGKY).

Belongs to the bacterial histone-like protein family. In terms of assembly, heterodimer of an alpha and a beta chain.

Its function is as follows. This protein is one of the two subunits of integration host factor, a specific DNA-binding protein that functions in genetic recombination as well as in transcriptional and translational control. The chain is Integration host factor subunit beta from Shewanella denitrificans (strain OS217 / ATCC BAA-1090 / DSM 15013).